Here is a 138-residue protein sequence, read N- to C-terminus: Large ribosomal subunit protein uL16 (138 aa).

A compositionally biased stretch (basic residues) spans 1 to 15; it reads MLSPKKVKYRKKQRG. The segment at 1–21 is disordered; sequence MLSPKKVKYRKKQRGRLSGEA.

It belongs to the universal ribosomal protein uL16 family. Part of the 50S ribosomal subunit.

Binds 23S rRNA and is also seen to make contacts with the A and possibly P site tRNAs. The polypeptide is Large ribosomal subunit protein uL16 (Borrelia garinii subsp. bavariensis (strain ATCC BAA-2496 / DSM 23469 / PBi) (Borreliella bavariensis)).